Consider the following 599-residue polypeptide: Cytochrome P450 monooxygenase ALT8 (599 aa).

2 helical membrane passes run leucine 4–glycine 21 and isoleucine 36–phenylalanine 56. Asparagine 127 carries an N-linked (GlcNAc...) asparagine glycan. A compositionally biased stretch (low complexity) spans aspartate 495–phenylalanine 504. The disordered stretch occupies residues aspartate 495–serine 522. Position 539 (cysteine 539) interacts with heme.

The protein belongs to the cytochrome P450 family. Heme serves as cofactor.

It localises to the membrane. It participates in secondary metabolite biosynthesis. Functionally, cytochrome P450 monooxygenase; part of the gene cluster that mediates the biosynthesis of the host-selective toxins (HSTs) AAL-toxins, sphinganine-analog mycotoxins responsible for Alternaria stem canker on tomato by the tomato pathotype. The biosynthesis starts with the polyketide synthase ALT1-catalyzed C-16 carbon chain assembly from one starter acetyl-CoA unit with malonyl-CoA extender units. ALT1 also selectively transfers methyl groups at the first and the third cycle of chain elongation for AAL toxin. The C-16 polyketide chain is released from the enzyme by a nucleophilic attack of a carbanion, which is derived from R-carbon of glycin by decarboxylation, on the carbonyl carbon of polyketide acyl chain. This step is probably catalyzed by a pyridoxal 5'-phosphate-dependent aminoacyl transferase ALT4. The respective functions of the other enzymes encoded by the cluster have still to be elucidated. The sphingosine N-acyltransferase-like protein ALT7 seems not to act as a resistance/self-tolerance factor against the toxin in the toxin biosynthetic gene cluster, contrary to what is expected. In Alternaria alternata (Alternaria rot fungus), this protein is Cytochrome P450 monooxygenase ALT8.